Consider the following 171-residue polypeptide: Tubulin polymerization-promoting protein family member 2 (171 aa).

The tract at residues 120-171 is disordered; that stretch reads LTDTSKYTGTHKERFDESGKGKGIAGREDVTDNSGYVSGYKGAGTYDKKGSN. Basic and acidic residues predominate over residues 129–149; that stretch reads THKERFDESGKGKGIAGREDV.

It belongs to the TPPP family.

It localises to the cytoplasm. Its subcellular location is the cytosol. The protein localises to the cell projection. It is found in the cilium. The protein resides in the flagellum. Its function is as follows. Probable regulator of microtubule dynamics required for sperm motility. In contrast to other members of the family, has no microtubule bundling activity. The protein is Tubulin polymerization-promoting protein family member 2 of Bos taurus (Bovine).